Consider the following 132-residue polypeptide: Long-chain acyl-CoA thioesterase FadM (132 aa).

Asp13 is an active-site residue.

This sequence belongs to the 4-hydroxybenzoyl-CoA thioesterase family. Homotetramer.

It catalyses the reaction (3E,5Z)-tetradecadienoyl-CoA + H2O = (3E,5Z)-tetradecadienoate + CoA + H(+). It carries out the reaction (3E,5Z)-dodecadienoyl-CoA + H2O = (3E,5Z)-dodecadienoate + CoA + H(+). The enzyme catalyses (9Z)-octadecenoyl-CoA + H2O = (9Z)-octadecenoate + CoA + H(+). The catalysed reaction is octadecanoyl-CoA + H2O = octadecanoate + CoA + H(+). It catalyses the reaction hexadecanoyl-CoA + H2O = hexadecanoate + CoA + H(+). It carries out the reaction (3S)-hydroxytetradecanoyl-CoA + H2O = (3S)-hydroxytetradecanoate + CoA + H(+). The enzyme catalyses tetradecanoyl-CoA + H2O = tetradecanoate + CoA + H(+). Its function is as follows. Long-chain acyl-CoA thioesterase that could be involved in beta-oxidation of fatty acids. Is most active with 3,5-tetradecadienoyl-CoA, a metabolite of oleic acid that is hydrolyzed during oleate beta-oxidation, but can also use other substrates such as 3,5-dodecadienoyl-CoA, 9-cis-octadecenoyl-CoA, octadecanoyl-CoA, hexadecanoyl-CoA, 3-hydroxytetradecanoyl-CoA and tetradecanoyl-CoA. This Escherichia coli (strain K12) protein is Long-chain acyl-CoA thioesterase FadM.